The sequence spans 362 residues: Probable dual-specificity RNA methyltransferase RlmN (362 aa).

Glutamate 91 (proton acceptor) is an active-site residue. In terms of domain architecture, Radical SAM core spans 97-329 (QHYGLSVCVT…KKNGVNCVVR (233 aa)). A disulfide bridge links cysteine 104 with cysteine 340. Residues cysteine 111, cysteine 115, and cysteine 118 each coordinate [4Fe-4S] cluster. S-adenosyl-L-methionine-binding positions include 163 to 164 (GE), serine 195, 218 to 220 (SLH), and asparagine 296. Cysteine 340 functions as the S-methylcysteine intermediate in the catalytic mechanism.

This sequence belongs to the radical SAM superfamily. RlmN family. Requires [4Fe-4S] cluster as cofactor.

The protein localises to the cytoplasm. It catalyses the reaction adenosine(2503) in 23S rRNA + 2 reduced [2Fe-2S]-[ferredoxin] + 2 S-adenosyl-L-methionine = 2-methyladenosine(2503) in 23S rRNA + 5'-deoxyadenosine + L-methionine + 2 oxidized [2Fe-2S]-[ferredoxin] + S-adenosyl-L-homocysteine. It carries out the reaction adenosine(37) in tRNA + 2 reduced [2Fe-2S]-[ferredoxin] + 2 S-adenosyl-L-methionine = 2-methyladenosine(37) in tRNA + 5'-deoxyadenosine + L-methionine + 2 oxidized [2Fe-2S]-[ferredoxin] + S-adenosyl-L-homocysteine. In terms of biological role, specifically methylates position 2 of adenine 2503 in 23S rRNA and position 2 of adenine 37 in tRNAs. In Streptococcus gordonii (strain Challis / ATCC 35105 / BCRC 15272 / CH1 / DL1 / V288), this protein is Probable dual-specificity RNA methyltransferase RlmN.